The chain runs to 432 residues: Alpha-ketoglutarate permease (432 aa).

The Cytoplasmic portion of the chain corresponds to 1 to 32 (MAESTVTADSKLTSSDTRRRIWAIVGASSGNL). A helical membrane pass occupies residues 33 to 53 (VEWFDFYVYSFCSLYFAHIFF). Over 54-62 (PSGNTTTQL) the chain is Periplasmic. The helical transmembrane segment at 63 to 83 (LQTAGVFAAGFLMRPIGGWLF) threads the bilayer. At 84–95 (GRIADKHGRKKS) the chain is on the cytoplasmic side. The helical transmembrane segment at 96-116 (MLLSVCMMCFGSLVIACLPGY) threads the bilayer. Residues 117–118 (ET) are Periplasmic-facing. Residues 119 to 139 (IGTWAPALLLLARLFQGLSVG) form a helical membrane-spanning segment. Over 140–162 (GEYGTSATYMSEVAVEGRKGFYA) the chain is Cytoplasmic. The chain crosses the membrane as a helical span at residues 163–183 (SFQYVTLIGGQLLALLVVVVL). Topologically, residues 184-193 (QHTMEDAALR) are periplasmic. The chain crosses the membrane as a helical span at residues 194–214 (EWGWRIPFALGAVLAVVALWL). Residues 215–243 (RRQLDETSQQETRALKEAGSLKGLWRNRR) lie on the Cytoplasmic side of the membrane. The helical transmembrane segment at 244-264 (AFIMVLGFTAAGSLCFYTFTT) threads the bilayer. Residues 265-279 (YMQKYLVNTAGMHAN) lie on the Periplasmic side of the membrane. The helical transmembrane segment at 280 to 300 (VASGIMTAALFVFMLIQPLIG) threads the bilayer. Residues 301–309 (ALSDKIGRR) are Cytoplasmic-facing. A helical membrane pass occupies residues 310-330 (TSMLCFGSLAAIFTVPILSAL). At 331-339 (QNVSSPYAA) the chain is on the periplasmic side. Residues 340 to 360 (FGLVMCALLIVSFYTSISGIL) traverse the membrane as a helical segment. Topologically, residues 361 to 373 (KAEMFPAQVRALG) are cytoplasmic. Residues 374–394 (VGLSYAVANAIFGGSAEYVAL) form a helical membrane-spanning segment. Over 395 to 402 (SLKSIGME) the chain is Periplasmic. A helical membrane pass occupies residues 403–423 (TAFFWYVTLMAVVAFLVSLML). Residues 424 to 432 (HRKGKGMRL) lie on the Cytoplasmic side of the membrane.

This sequence belongs to the major facilitator superfamily. Metabolite:H+ Symporter (MHS) family (TC 2.A.1.6) family.

The protein resides in the cell inner membrane. Uptake of alpha-ketoglutarate across the boundary membrane with the concomitant import of a cation (symport system). The chain is Alpha-ketoglutarate permease (kgtP) from Escherichia coli (strain K12).